Reading from the N-terminus, the 1058-residue chain is Carbamoyl phosphate synthase large chain (1058 aa).

Residues 1 to 401 (MPKRKDIQKI…SLLKACRSLE (401 aa)) form a carboxyphosphate synthetic domain region. Positions 129, 169, 175, 176, 208, 210, 215, 241, 242, 243, 284, and 298 each coordinate ATP. In terms of domain architecture, ATP-grasp 1 spans 133 to 327 (KQLMQELDQP…IAKLAAKIAV (195 aa)). Residues glutamine 284, glutamate 298, and asparagine 300 each coordinate Mg(2+). Residues glutamine 284, glutamate 298, and asparagine 300 each contribute to the Mn(2+) site. Residues 402 to 546 (IGVCHNEMTS…YSTYELENES (145 aa)) form an oligomerization domain region. A carbamoyl phosphate synthetic domain region spans residues 547 to 929 (VQSNKESILV…ALYKAFEANN (383 aa)). The ATP-grasp 2 domain occupies 671–861 (EKALKELGIP…MAQIATKLIL (191 aa)). ATP is bound by residues arginine 707, serine 746, isoleucine 748, glutamate 752, glycine 777, valine 778, histidine 779, serine 780, glutamine 820, and glutamate 832. Glutamine 820, glutamate 832, and asparagine 834 together coordinate Mg(2+). 3 residues coordinate Mn(2+): glutamine 820, glutamate 832, and asparagine 834. An MGS-like domain is found at 930 to 1058 (SHLSEFGQIV…ESRCFNIEAI (129 aa)). The interval 930–1058 (SHLSEFGQIV…ESRCFNIEAI (129 aa)) is allosteric domain.

Belongs to the CarB family. Composed of two chains; the small (or glutamine) chain promotes the hydrolysis of glutamine to ammonia, which is used by the large (or ammonia) chain to synthesize carbamoyl phosphate. Tetramer of heterodimers (alpha,beta)4. Mg(2+) is required as a cofactor. Requires Mn(2+) as cofactor.

It carries out the reaction hydrogencarbonate + L-glutamine + 2 ATP + H2O = carbamoyl phosphate + L-glutamate + 2 ADP + phosphate + 2 H(+). The catalysed reaction is hydrogencarbonate + NH4(+) + 2 ATP = carbamoyl phosphate + 2 ADP + phosphate + 2 H(+). It participates in amino-acid biosynthesis; L-arginine biosynthesis; carbamoyl phosphate from bicarbonate: step 1/1. Its pathway is pyrimidine metabolism; UMP biosynthesis via de novo pathway; (S)-dihydroorotate from bicarbonate: step 1/3. Its function is as follows. Large subunit of the glutamine-dependent carbamoyl phosphate synthetase (CPSase). CPSase catalyzes the formation of carbamoyl phosphate from the ammonia moiety of glutamine, carbonate, and phosphate donated by ATP, constituting the first step of 2 biosynthetic pathways, one leading to arginine and/or urea and the other to pyrimidine nucleotides. The large subunit (synthetase) binds the substrates ammonia (free or transferred from glutamine from the small subunit), hydrogencarbonate and ATP and carries out an ATP-coupled ligase reaction, activating hydrogencarbonate by forming carboxy phosphate which reacts with ammonia to form carbamoyl phosphate. The sequence is that of Carbamoyl phosphate synthase large chain from Streptococcus pyogenes serotype M3 (strain SSI-1).